A 718-amino-acid chain; its full sequence is Polyribonucleotide nucleotidyltransferase (718 aa).

Mg(2+) contacts are provided by Asp496 and Asp502. In terms of domain architecture, KH spans 563-622 (PRLLTIKIDPDMIGLVIGPGGKTIKGITEETGAKIDIEDDGTVTISAVDENKAKRARNIV). The region spanning 632-700 (GDVYAGRVTR…NKGRINLTRL (69 aa)) is the S1 motif domain.

This sequence belongs to the polyribonucleotide nucleotidyltransferase family. The cofactor is Mg(2+).

It is found in the cytoplasm. The enzyme catalyses RNA(n+1) + phosphate = RNA(n) + a ribonucleoside 5'-diphosphate. Involved in mRNA degradation. Catalyzes the phosphorolysis of single-stranded polyribonucleotides processively in the 3'- to 5'-direction. The chain is Polyribonucleotide nucleotidyltransferase from Trichormus variabilis (strain ATCC 29413 / PCC 7937) (Anabaena variabilis).